A 157-amino-acid polypeptide reads, in one-letter code: uncharacterized protein (157 aa).

This is an uncharacterized protein from Saccharomyces cerevisiae (strain ATCC 204508 / S288c) (Baker's yeast).